We begin with the raw amino-acid sequence, 135 residues long: Classical arabinogalactan protein 4 (135 aa).

Positions 1–21 (MGSKIVQVFLMLALFATSALA) are cleaved as a signal peptide. The residue at position 22 (Gln22) is a Pyrrolidone carboxylic acid. The segment at 22 to 112 (QAPAPTPTAT…PSDASPAPSA (91 aa)) is disordered. Pro24, Pro26, Pro28, Pro32, Pro33, Pro34, Pro37, Pro38, and Pro39 each carry 4-hydroxyproline. O-linked (Ara...) hydroxyproline glycans are attached at residues Pro24, Pro26, Pro28, Pro32, Pro33, Pro34, Pro37, Pro38, and Pro39. Over residues 25–76 (APTPTATPPPATPPPVATPPPVATPPPAATPAPATPPPAATPAPATTPPSVA) the composition is skewed to pro residues. A compositionally biased stretch (low complexity) spans 96 to 112 (SPSSAPGPSDASPAPSA). Ser111 is lipidated: GPI-anchor amidated serine. The propeptide at 112-135 (AAFSNKAFFAGTAFAAIMYAAVLA) is removed in mature form.

The protein belongs to the classical AGP family. In terms of processing, O-glycosylated on hydroxyprolines; noncontiguous hydroxylproline residues are glycosylated with arabinogalactan. In terms of tissue distribution, highly expressed in roots, flowers and leaves.

The protein localises to the cell membrane. Its function is as follows. Proteoglycan that seems to be implicated in diverse developmental roles such as differentiation, cell-cell recognition, embryogenesis and programmed cell death. The protein is Classical arabinogalactan protein 4 (AGP4) of Arabidopsis thaliana (Mouse-ear cress).